The primary structure comprises 441 residues: Glutamyl-tRNA reductase (441 aa).

Substrate is bound by residues 49–52 (TCNR), Ser109, 114–116 (EGQ), and Gln120. Cys50 (nucleophile) is an active-site residue. 198-203 (GAGRMS) lines the NADP(+) pocket.

The protein belongs to the glutamyl-tRNA reductase family. As to quaternary structure, homodimer.

The catalysed reaction is (S)-4-amino-5-oxopentanoate + tRNA(Glu) + NADP(+) = L-glutamyl-tRNA(Glu) + NADPH + H(+). Its pathway is porphyrin-containing compound metabolism; protoporphyrin-IX biosynthesis; 5-aminolevulinate from L-glutamyl-tRNA(Glu): step 1/2. It functions in the pathway porphyrin-containing compound metabolism; chlorophyll biosynthesis. Catalyzes the NADPH-dependent reduction of glutamyl-tRNA(Glu) to glutamate 1-semialdehyde (GSA). The chain is Glutamyl-tRNA reductase from Prochlorococcus marinus (strain NATL2A).